We begin with the raw amino-acid sequence, 727 residues long: Elongation factor 2 (727 aa).

Residues 19 to 260 (DQIRNMGICA…MAITHLPNPL (242 aa)) form the tr-type G domain. Residues 28 to 35 (AHIDHGKT), 94 to 98 (DTPGH), and 148 to 151 (NKVD) contribute to the GTP site. H603 is modified (diphthamide).

The protein belongs to the TRAFAC class translation factor GTPase superfamily. Classic translation factor GTPase family. EF-G/EF-2 subfamily.

It localises to the cytoplasm. In terms of biological role, catalyzes the GTP-dependent ribosomal translocation step during translation elongation. During this step, the ribosome changes from the pre-translocational (PRE) to the post-translocational (POST) state as the newly formed A-site-bound peptidyl-tRNA and P-site-bound deacylated tRNA move to the P and E sites, respectively. Catalyzes the coordinated movement of the two tRNA molecules, the mRNA and conformational changes in the ribosome. The chain is Elongation factor 2 from Methanococcus maripaludis (strain C6 / ATCC BAA-1332).